A 218-amino-acid chain; its full sequence is Thiopurine S-methyltransferase (218 aa).

S-adenosyl-L-methionine-binding residues include tryptophan 10, leucine 45, glutamate 66, and arginine 123.

Belongs to the class I-like SAM-binding methyltransferase superfamily. TPMT family.

Its subcellular location is the cytoplasm. The enzyme catalyses S-adenosyl-L-methionine + a thiopurine = S-adenosyl-L-homocysteine + a thiopurine S-methylether.. In Azotobacter vinelandii (strain DJ / ATCC BAA-1303), this protein is Thiopurine S-methyltransferase.